The primary structure comprises 157 residues: Protein MG115 (157 aa).

This sequence belongs to the CinA family.

The chain is Protein MG115 from Mycoplasma genitalium (strain ATCC 33530 / DSM 19775 / NCTC 10195 / G37) (Mycoplasmoides genitalium).